The sequence spans 330 residues: uncharacterized protein (330 aa).

Residues 2–22 traverse the membrane as a helical segment; that stretch reads IKPIYLIIIGTVICLVILYYF. N-linked (GlcNAc...) asparagine; by host glycans are attached at residues N72, N94, N234, and N315.

It is found in the membrane. This is an uncharacterized protein from Acanthamoeba polyphaga mimivirus (APMV).